Here is a 343-residue protein sequence, read N- to C-terminus: Anthranilate phosphoribosyltransferase (343 aa).

Residues G86, 89–90 (GD), T94, 96–99 (NIST), 114–122 (KHGNKSASG), and S126 each bind 5-phospho-alpha-D-ribose 1-diphosphate. G86 provides a ligand contact to anthranilate. S98 contacts Mg(2+). Residue N117 coordinates anthranilate. Position 172 (R172) interacts with anthranilate. Mg(2+) is bound by residues D231 and E232.

It belongs to the anthranilate phosphoribosyltransferase family. Homodimer. It depends on Mg(2+) as a cofactor.

The catalysed reaction is N-(5-phospho-beta-D-ribosyl)anthranilate + diphosphate = 5-phospho-alpha-D-ribose 1-diphosphate + anthranilate. The protein operates within amino-acid biosynthesis; L-tryptophan biosynthesis; L-tryptophan from chorismate: step 2/5. Functionally, catalyzes the transfer of the phosphoribosyl group of 5-phosphorylribose-1-pyrophosphate (PRPP) to anthranilate to yield N-(5'-phosphoribosyl)-anthranilate (PRA). The sequence is that of Anthranilate phosphoribosyltransferase from Prochlorococcus marinus subsp. pastoris (strain CCMP1986 / NIES-2087 / MED4).